The following is a 351-amino-acid chain: Photosystem II D2 protein (351 aa).

Residues 39–59 (TAYLAIGGWLTGTTFVTSWYT) form a helical membrane-spanning segment. Histidine 116 contributes to the chlorophyll a binding site. A helical transmembrane segment spans residues 123–139 (GFMLRQFEIARLVGIRP). Pheophytin a-binding residues include glutamine 128 and asparagine 141. The chain crosses the membrane as a helical span at residues 151–164 (VFVSVFLMYPLGQS). Position 196 (histidine 196) interacts with chlorophyll a. A helical transmembrane segment spans residues 206–226 (GALLCAIHGATVENTLFEDGE). Residues histidine 213 and phenylalanine 260 each contribute to the a plastoquinone site. Histidine 213 is a Fe cation binding site. Fe cation is bound at residue histidine 267. The chain crosses the membrane as a helical span at residues 277-293 (GLWTSSIGIIGLALNLR).

It belongs to the reaction center PufL/M/PsbA/D family. In terms of assembly, PSII is composed of 1 copy each of membrane proteins PsbA, PsbB, PsbC, PsbD, PsbE, PsbF, PsbH, PsbI, PsbJ, PsbK, PsbL, PsbM, PsbT, PsbX, PsbY, PsbZ, Psb30/Ycf12, peripheral proteins PsbO, CyanoQ (PsbQ), PsbU, PsbV and a large number of cofactors. It forms dimeric complexes. It depends on The D1/D2 heterodimer binds P680, chlorophylls that are the primary electron donor of PSII, and subsequent electron acceptors. It shares a non-heme iron and each subunit binds pheophytin, quinone, additional chlorophylls, carotenoids and lipids. There is also a Cl(-1) ion associated with D1 and D2, which is required for oxygen evolution. The PSII complex binds additional chlorophylls, carotenoids and specific lipids. as a cofactor.

Its subcellular location is the cellular thylakoid membrane. The catalysed reaction is 2 a plastoquinone + 4 hnu + 2 H2O = 2 a plastoquinol + O2. Its function is as follows. Photosystem II (PSII) is a light-driven water:plastoquinone oxidoreductase that uses light energy to abstract electrons from H(2)O, generating O(2) and a proton gradient subsequently used for ATP formation. It consists of a core antenna complex that captures photons, and an electron transfer chain that converts photonic excitation into a charge separation. The D1/D2 (PsbA/PsbD) reaction center heterodimer binds P680, the primary electron donor of PSII as well as several subsequent electron acceptors. D2 is needed for assembly of a stable PSII complex. The sequence is that of Photosystem II D2 protein from Synechococcus sp. (strain CC9605).